The following is a 310-amino-acid chain: Olfactory receptor 4D1 (310 aa).

Residues 1 to 25 (MEPQNTTQVSMFVLLGFSQTQELQK) lie on the Extracellular side of the membrane. The N-linked (GlcNAc...) asparagine glycan is linked to Asn5. Residues 26-49 (FLFLLFLLVYVTTIVGNLLIMVTV) form a helical membrane-spanning segment. Over 50–57 (TFDCRLHT) the chain is Cytoplasmic. Residues 58-79 (PMYFLLRNLALIDLCYSTVTSP) traverse the membrane as a helical segment. At 80 to 100 (KMLVDFLHETKTISYQGCMAQ) the chain is on the extracellular side. An intrachain disulfide couples Cys97 to Cys189. Residues 101 to 120 (IFFFHLLGGGTVFFLSVMAY) traverse the membrane as a helical segment. The Cytoplasmic portion of the chain corresponds to 121-139 (DRYIAISQPLRYVTIMNTQ). A helical transmembrane segment spans residues 140-158 (LCVGLVVAAWVGGFVHSIV). Residues 159-195 (QLALILPLPFCGPNILDNFYCDVPQVLRLACTDTSLL) are Extracellular-facing. Residues 196–219 (EFLMISNSGLLVIIWFLLLLISYT) form a helical membrane-spanning segment. Topologically, residues 220–235 (VILVMLRSHSGKARRK) are cytoplasmic. Residues 236–258 (AASTCTTHIIVVSMIFIPCIYIY) traverse the membrane as a helical segment. Residues 259-269 (TWPFTPFLMDK) lie on the Extracellular side of the membrane. A helical membrane pass occupies residues 270–289 (AVSISYTVMTPMLNPMIYTL). The Cytoplasmic segment spans residues 290-310 (RNQDMKAAMRRLGKCLVICRE).

It belongs to the G-protein coupled receptor 1 family.

It is found in the cell membrane. Functionally, odorant receptor. The protein is Olfactory receptor 4D1 (OR4D1) of Homo sapiens (Human).